The chain runs to 469 residues: Argininosuccinate lyase (469 aa).

It belongs to the lyase 1 family. Argininosuccinate lyase subfamily.

The protein resides in the cytoplasm. It carries out the reaction 2-(N(omega)-L-arginino)succinate = fumarate + L-arginine. Its pathway is amino-acid biosynthesis; L-arginine biosynthesis; L-arginine from L-ornithine and carbamoyl phosphate: step 3/3. The polypeptide is Argininosuccinate lyase (Burkholderia multivorans (strain ATCC 17616 / 249)).